Here is a 392-residue protein sequence, read N- to C-terminus: ABSCISIC ACID-INSENSITIVE 5-like protein 4 (392 aa).

The interval 1 to 22 (MGTHIDINNLGGDTSRGNESKP) is disordered. A phosphoserine mark is found at serine 28, serine 50, and serine 96. Threonine 135 carries the post-translational modification Phosphothreonine. A disordered region spans residues 266-297 (NMGGAGGTVTATSPGTSSAENNTWSSPVPYVF). Polar residues predominate over residues 274 to 291 (VTATSPGTSSAENNTWSS). In terms of domain architecture, bZIP spans 311 to 374 (VERRQKRMIK…NSELKEFSKQ (64 aa)). The basic motif stretch occupies residues 313–332 (RRQKRMIKNRESAARSRARK). The interval 339–360 (LEAEIESLKLVNQDLQKKQAEI) is leucine-zipper.

This sequence belongs to the bZIP family. ABI5 subfamily. As to quaternary structure, DNA-binding heterodimer. Interacts with ABI3 and the AFP proteins AFP1, AFP2, AFP3 and AFP4. Post-translationally, phosphorylated by CPK4, CPK11, SRK2D and SRK2I in vitro.

It is found in the nucleus. Functionally, binds to the ABA-responsive element (ABRE). Could participate in abscisic acid-regulated gene expression. The sequence is that of ABSCISIC ACID-INSENSITIVE 5-like protein 4 (ABF1) from Arabidopsis thaliana (Mouse-ear cress).